Reading from the N-terminus, the 1394-residue chain is DNA-directed RNA polymerase subunit beta' (1394 aa).

The Zn(2+) site is built by cysteine 70, cysteine 72, cysteine 85, and cysteine 88. Mg(2+) is bound by residues aspartate 470, aspartate 472, and aspartate 474. 4 residues coordinate Zn(2+): cysteine 815, cysteine 889, cysteine 896, and cysteine 899.

Belongs to the RNA polymerase beta' chain family. As to quaternary structure, the RNAP catalytic core consists of 2 alpha, 1 beta, 1 beta' and 1 omega subunit. When a sigma factor is associated with the core the holoenzyme is formed, which can initiate transcription. Mg(2+) is required as a cofactor. Requires Zn(2+) as cofactor.

The catalysed reaction is RNA(n) + a ribonucleoside 5'-triphosphate = RNA(n+1) + diphosphate. Its function is as follows. DNA-dependent RNA polymerase catalyzes the transcription of DNA into RNA using the four ribonucleoside triphosphates as substrates. This is DNA-directed RNA polymerase subunit beta' from Anaeromyxobacter sp. (strain K).